A 519-amino-acid polypeptide reads, in one-letter code: ATP synthase subunit alpha, mitochondrial (519 aa).

188 to 195 (GDRQTGKS) is a binding site for ATP.

It belongs to the ATPase alpha/beta chains family. F-type ATPases have 2 components, CF(1) - the catalytic core - and CF(0) - the membrane proton channel. CF(1) has five subunits: alpha(3), beta(3), gamma(1), delta(1), epsilon(1). CF(0) has three main subunits: a, b and c.

Its subcellular location is the mitochondrion. It localises to the mitochondrion inner membrane. Its function is as follows. Mitochondrial membrane ATP synthase (F(1)F(0) ATP synthase or Complex V) produces ATP from ADP in the presence of a proton gradient across the membrane which is generated by electron transport complexes of the respiratory chain. F-type ATPases consist of two structural domains, F(1) - containing the extramembraneous catalytic core, and F(0) - containing the membrane proton channel, linked together by a central stalk and a peripheral stalk. During catalysis, ATP synthesis in the catalytic domain of F(1) is coupled via a rotary mechanism of the central stalk subunits to proton translocation. Subunits alpha and beta form the catalytic core in F(1). Rotation of the central stalk against the surrounding alpha(3)beta(3) subunits leads to hydrolysis of ATP in three separate catalytic sites on the beta subunits. Subunit alpha does not bear the catalytic high-affinity ATP-binding sites. This Dictyostelium citrinum (Slime mold) protein is ATP synthase subunit alpha, mitochondrial (atp1).